The following is a 513-amino-acid chain: GMP synthase [glutamine-hydrolyzing] (513 aa).

One can recognise a Glutamine amidotransferase type-1 domain in the interval 3-200 (SVLVLDFGSQ…LINIAGIRPD (198 aa)). Cys-80 functions as the Nucleophile in the catalytic mechanism. Residues His-174 and Glu-176 contribute to the active site. Residues 201 to 388 (WSSKSFIEHQ…LGIPEDILMR (188 aa)) form the GMPS ATP-PPase domain. 228 to 234 (SGGVDST) lines the ATP pocket.

Homodimer.

The catalysed reaction is XMP + L-glutamine + ATP + H2O = GMP + L-glutamate + AMP + diphosphate + 2 H(+). It participates in purine metabolism; GMP biosynthesis; GMP from XMP (L-Gln route): step 1/1. In terms of biological role, catalyzes the synthesis of GMP from XMP. This is GMP synthase [glutamine-hydrolyzing] from Chlorobium luteolum (strain DSM 273 / BCRC 81028 / 2530) (Pelodictyon luteolum).